A 191-amino-acid chain; its full sequence is IMP cyclohydrolase (191 aa).

It belongs to the archaeal IMP cyclohydrolase family.

It catalyses the reaction IMP + H2O = 5-formamido-1-(5-phospho-D-ribosyl)imidazole-4-carboxamide. Its pathway is purine metabolism; IMP biosynthesis via de novo pathway; IMP from 5-formamido-1-(5-phospho-D-ribosyl)imidazole-4-carboxamide: step 1/1. Catalyzes the cyclization of 5-formylamidoimidazole-4-carboxamide ribonucleotide to IMP. The sequence is that of IMP cyclohydrolase from Natronomonas pharaonis (strain ATCC 35678 / DSM 2160 / CIP 103997 / JCM 8858 / NBRC 14720 / NCIMB 2260 / Gabara) (Halobacterium pharaonis).